We begin with the raw amino-acid sequence, 268 residues long: Glucosamine-6-phosphate deaminase (268 aa).

D67 acts as the Proton acceptor; for enolization step in catalysis. N137 acts as the For ring-opening step in catalysis. Catalysis depends on H139, which acts as the Proton acceptor; for ring-opening step. The For ring-opening step role is filled by E144.

It belongs to the glucosamine/galactosamine-6-phosphate isomerase family. NagB subfamily. As to quaternary structure, homohexamer.

It carries out the reaction alpha-D-glucosamine 6-phosphate + H2O = beta-D-fructose 6-phosphate + NH4(+). The protein operates within amino-sugar metabolism; N-acetylneuraminate degradation; D-fructose 6-phosphate from N-acetylneuraminate: step 5/5. Its function is as follows. Catalyzes the reversible isomerization-deamination of glucosamine 6-phosphate (GlcN6P) to form fructose 6-phosphate (Fru6P) and ammonium ion. The protein is Glucosamine-6-phosphate deaminase of Pseudoalteromonas translucida (strain TAC 125).